The sequence spans 105 residues: Multidrug resistance protein EbrA (105 aa).

The next 4 helical transmembrane spans lie at 2-22, 35-55, 57-77, and 84-104; these read LVGY…AAML, ALVV…LNHI, LSLS…VIGV, and LNAK…LLNW.

It belongs to the drug/metabolite transporter (DMT) superfamily. Small multidrug resistance (SMR) (TC 2.A.7.1) family. EbrA/EbrB subfamily. In terms of assembly, the efflux pump is composed of EbrA and EbrB.

The protein resides in the cell membrane. Its function is as follows. Part of a multidrug efflux pump. Confers resistance to cationic lipophilic dyes such as ethidium bromide, acriflavine, pyronine Y and safranin O. The efflux is probably coupled to an influx of protons. The polypeptide is Multidrug resistance protein EbrA (ebrA) (Bacillus atrophaeus).